The sequence spans 307 residues: N-acetylmuramic acid 6-phosphate etherase (307 aa).

An SIS domain is found at threonine 59–lysine 222. Glutamate 87 functions as the Proton donor in the catalytic mechanism. Glutamate 118 is an active-site residue.

Belongs to the GCKR-like family. MurNAc-6-P etherase subfamily. In terms of assembly, homodimer.

The enzyme catalyses N-acetyl-D-muramate 6-phosphate + H2O = N-acetyl-D-glucosamine 6-phosphate + (R)-lactate. The protein operates within amino-sugar metabolism; N-acetylmuramate degradation. Its function is as follows. Specifically catalyzes the cleavage of the D-lactyl ether substituent of MurNAc 6-phosphate, producing GlcNAc 6-phosphate and D-lactate. This Trichormus variabilis (strain ATCC 29413 / PCC 7937) (Anabaena variabilis) protein is N-acetylmuramic acid 6-phosphate etherase.